Here is a 756-residue protein sequence, read N- to C-terminus: Catalase-peroxidase (756 aa).

A cross-link (tryptophyl-tyrosyl-methioninium (Trp-Tyr) (with M-270)) is located at residues Trp91–Tyr244. His92 acts as the Proton acceptor in catalysis. Positions Ala198–Asn230 are disordered. Residues Pro214–Arg223 are compositionally biased toward basic and acidic residues. The segment at residues Tyr244–Met270 is a cross-link (tryptophyl-tyrosyl-methioninium (Tyr-Met) (with W-91)). His285 provides a ligand contact to heme b.

The protein belongs to the peroxidase family. Peroxidase/catalase subfamily. Homodimer or homotetramer. Heme b serves as cofactor. Formation of the three residue Trp-Tyr-Met cross-link is important for the catalase, but not the peroxidase activity of the enzyme.

The enzyme catalyses H2O2 + AH2 = A + 2 H2O. It carries out the reaction 2 H2O2 = O2 + 2 H2O. Its function is as follows. Bifunctional enzyme with both catalase and broad-spectrum peroxidase activity. This is Catalase-peroxidase from Pseudomonas syringae pv. syringae (strain B728a).